Here is a 201-residue protein sequence, read N- to C-terminus: Small ribosomal subunit protein uS4c (201 aa).

An S4 RNA-binding domain is found at 89 to 150 (MRLDNIVFRL…RQKSQAIITK (62 aa)).

Belongs to the universal ribosomal protein uS4 family. In terms of assembly, part of the 30S ribosomal subunit. Contacts protein S5. The interaction surface between S4 and S5 is involved in control of translational fidelity.

It localises to the plastid. It is found in the chloroplast. One of the primary rRNA binding proteins, it binds directly to 16S rRNA where it nucleates assembly of the body of the 30S subunit. In terms of biological role, with S5 and S12 plays an important role in translational accuracy. In Funaria hygrometrica (Moss), this protein is Small ribosomal subunit protein uS4c (rps4).